We begin with the raw amino-acid sequence, 255 residues long: Diphthine synthase (255 aa).

Residues Leu-9, Asp-85, Val-88, 113-114 (SI), Leu-164, Ala-207, and His-232 contribute to the S-adenosyl-L-methionine site.

The protein belongs to the diphthine synthase family. As to quaternary structure, homodimer.

The catalysed reaction is 2-[(3S)-amino-3-carboxypropyl]-L-histidyl-[translation elongation factor 2] + 3 S-adenosyl-L-methionine = diphthine-[translation elongation factor 2] + 3 S-adenosyl-L-homocysteine + 3 H(+). It participates in protein modification; peptidyl-diphthamide biosynthesis. In terms of biological role, S-adenosyl-L-methionine-dependent methyltransferase that catalyzes the trimethylation of the amino group of the modified target histidine residue in translation elongation factor 2 (EF-2), to form an intermediate called diphthine. The three successive methylation reactions represent the second step of diphthamide biosynthesis. The chain is Diphthine synthase from Methanococcus maripaludis (strain DSM 14266 / JCM 13030 / NBRC 101832 / S2 / LL).